A 439-amino-acid polypeptide reads, in one-letter code: Glutamine synthetase (439 aa).

One can recognise a GS beta-grasp domain in the interval 13–98; that stretch reads ENVRFIRLQF…VICDVYTPDG (86 aa). A GS catalytic domain is found at 105–439; the sequence is PRYRLRRMME…NWELQRYLYL (335 aa). Residues Glu-128 and Glu-130 each coordinate Mg(2+). ATP is bound at residue Glu-180. Mg(2+) is bound by residues Glu-185 and Glu-192. L-glutamate contacts are provided by residues 236–237 and Gly-237; that span reads NG. His-241 is a binding site for Mg(2+). ATP is bound by residues 243–245 and Ser-245; that span reads HMS. L-glutamate-binding residues include Arg-294, Glu-300, and Arg-312. Arg-312, Arg-317, and Lys-324 together coordinate ATP. Glu-329 is a binding site for Mg(2+). Arg-331 serves as a coordination point for L-glutamate.

This sequence belongs to the glutamine synthetase family. Oligomer of 12 subunits arranged in the form of two hexagons. In its feedback-inhibited form, interacts with TnrA in order to block its DNA-binding activity. Mg(2+) serves as cofactor.

It localises to the cytoplasm. It carries out the reaction L-glutamate + NH4(+) + ATP = L-glutamine + ADP + phosphate + H(+). Its activity is regulated as follows. Inhibited by glutamine. Glutamine synthetase (GS) is an unusual multitasking protein that functions as an enzyme, a transcription coregulator, and a chaperone in ammonium assimilation and in the regulation of genes involved in nitrogen metabolism. It catalyzes the ATP-dependent biosynthesis of glutamine from glutamate and ammonia. Feedback-inhibited GlnA also interacts with and regulates the activity of the transcriptional regulator TnrA. During nitrogen limitation, TnrA is in its DNA-binding active state and turns on the transcription of genes required for nitrogen assimilation. Under conditions of nitrogen excess, feedback-inhibited GlnA forms a stable complex with TnrA, which inhibits its DNA-binding activity. In contrast, feedback-inhibited GlnA acts as a chaperone to stabilize the DNA-binding activity of GlnR, which represses the transcription of nitrogen assimilation genes. In Thermotoga maritima (strain ATCC 43589 / DSM 3109 / JCM 10099 / NBRC 100826 / MSB8), this protein is Glutamine synthetase.